The chain runs to 72 residues: Translation initiation factor IF-1 (72 aa).

An S1-like domain is found at 1-72 (MAKEDNIEMQ…SKGRIVFRSR (72 aa)).

It belongs to the IF-1 family. As to quaternary structure, component of the 30S ribosomal translation pre-initiation complex which assembles on the 30S ribosome in the order IF-2 and IF-3, IF-1 and N-formylmethionyl-tRNA(fMet); mRNA recruitment can occur at any time during PIC assembly.

Its subcellular location is the cytoplasm. In terms of biological role, one of the essential components for the initiation of protein synthesis. Stabilizes the binding of IF-2 and IF-3 on the 30S subunit to which N-formylmethionyl-tRNA(fMet) subsequently binds. Helps modulate mRNA selection, yielding the 30S pre-initiation complex (PIC). Upon addition of the 50S ribosomal subunit IF-1, IF-2 and IF-3 are released leaving the mature 70S translation initiation complex. In Klebsiella pneumoniae subsp. pneumoniae (strain ATCC 700721 / MGH 78578), this protein is Translation initiation factor IF-1.